The primary structure comprises 85 residues: Translation initiation factor IF-1 1 (85 aa).

The S1-like domain occupies 1-72 (MSKEDLIEMQ…NKGRLTFRHI (72 aa)).

This sequence belongs to the IF-1 family. In terms of assembly, component of the 30S ribosomal translation pre-initiation complex which assembles on the 30S ribosome in the order IF-2 and IF-3, IF-1 and N-formylmethionyl-tRNA(fMet); mRNA recruitment can occur at any time during PIC assembly.

It is found in the cytoplasm. Its function is as follows. One of the essential components for the initiation of protein synthesis. Stabilizes the binding of IF-2 and IF-3 on the 30S subunit to which N-formylmethionyl-tRNA(fMet) subsequently binds. Helps modulate mRNA selection, yielding the 30S pre-initiation complex (PIC). Upon addition of the 50S ribosomal subunit IF-1, IF-2 and IF-3 are released leaving the mature 70S translation initiation complex. In Paracidovorax citrulli (strain AAC00-1) (Acidovorax citrulli), this protein is Translation initiation factor IF-1 1.